Reading from the N-terminus, the 393-residue chain is Matrix metalloproteinase-23 (393 aa).

Topologically, residues Met-1–Gln-20 are cytoplasmic. Positions Met-1–Arg-81 are excised as a propeptide. The helical; Signal-anchor for type II membrane protein transmembrane segment at Leu-21 to Gly-41 threads the bilayer. The Lumenal portion of the chain corresponds to Thr-42–Ser-393. The segment at Thr-60 to Arg-79 is disordered. Asn-95 and Asn-151 each carry an N-linked (GlcNAc...) asparagine glycan. A Zn(2+)-binding site is contributed by His-214. Glu-215 is an active-site residue. Zn(2+) contacts are provided by His-218 and His-224. Residue Asn-235 is glycosylated (N-linked (GlcNAc...) asparagine). The region spanning Cys-258–Cys-292 is the ShKT domain. 3 disulfide bridges follow: Cys-258/Cys-292, Cys-265/Cys-285, and Cys-274/Cys-289. One can recognise an Ig-like C2-type domain in the interval Pro-298–Ser-383. A glycan (N-linked (GlcNAc...) asparagine) is linked at Asn-319. A disulfide bond links Cys-324 and Cys-373.

It belongs to the peptidase M10A family. It depends on Zn(2+) as a cofactor. Post-translationally, N-glycosylated. Proteolytic cleavage might yield an active form.

It is found in the membrane. Its subcellular location is the endoplasmic reticulum membrane. In terms of biological role, protease. May regulate the surface expression of some potassium channels by retaining them in the endoplasmic reticulum. In Bos taurus (Bovine), this protein is Matrix metalloproteinase-23 (MMP23).